The chain runs to 167 residues: MSEYTTEADTVEDITESDEFTGTYTSESSTPATGGNSIIAPGGATGRRKEAVARVRIVPGTGKWTINGRELDNYFPNKVHQQLVNEPFRVTALEGSFDVIARIHGGGSSGQAGALRLGVARALNAIDLEANRPQLKKAGFLTRDPRATERKKAGLKKARKAPQFSKR.

Disordered regions lie at residues 1–45 and 137–167; these read MSEY…GGAT and KAGFLTRDPRATERKKAGLKKARKAPQFSKR. The span at 9–19 shows a compositional bias: acidic residues; it reads DTVEDITESDE. The segment covering 20 to 36 has biased composition (polar residues); it reads FTGTYTSESSTPATGGN. Residues 143–152 show a composition bias toward basic and acidic residues; it reads RDPRATERKK. Over residues 153-167 the composition is skewed to basic residues; the sequence is AGLKKARKAPQFSKR.

The protein belongs to the universal ribosomal protein uS9 family.

The chain is Small ribosomal subunit protein uS9 from Kineococcus radiotolerans (strain ATCC BAA-149 / DSM 14245 / SRS30216).